The following is a 383-amino-acid chain: uncharacterized protein (383 aa).

The segment at 1–55 (MSSKLTVNAHYSPLKDEDPLDHIDSQTALDSMETDSTGKSSLYFSKSDDPLSKDI) is disordered. A compositionally biased stretch (basic and acidic residues) spans 13–24 (PLKDEDPLDHID). Polar residues predominate over residues 25–44 (SQTALDSMETDSTGKSSLYF). The span at 46–55 (KSDDPLSKDI) shows a compositional bias: basic and acidic residues. The next 10 membrane-spanning stretches (helical) occupy residues 87-107 (LTIF…TILN), 112-132 (NIIN…SLMV), 157-177 (FIFV…FVPV), 179-199 (FYQI…FVLL), 205-225 (LFPF…VRFE), 228-248 (VAPI…IESV), 262-282 (LIYI…VASL), 299-319 (FFIV…ATFT), 329-349 (YMIS…AFLG), and 352-372 (LYGN…LYTL).

This sequence belongs to the TPT transporter family.

The protein resides in the membrane. This is an uncharacterized protein from Schizosaccharomyces pombe (strain 972 / ATCC 24843) (Fission yeast).